Reading from the N-terminus, the 736-residue chain is 1,4-alpha-glucan branching enzyme GlgB (736 aa).

Catalysis depends on aspartate 415, which acts as the Nucleophile. The Proton donor role is filled by glutamate 470.

Belongs to the glycosyl hydrolase 13 family. GlgB subfamily. As to quaternary structure, monomer.

It carries out the reaction Transfers a segment of a (1-&gt;4)-alpha-D-glucan chain to a primary hydroxy group in a similar glucan chain.. It functions in the pathway glycan biosynthesis; glycogen biosynthesis. Functionally, catalyzes the formation of the alpha-1,6-glucosidic linkages in glycogen by scission of a 1,4-alpha-linked oligosaccharide from growing alpha-1,4-glucan chains and the subsequent attachment of the oligosaccharide to the alpha-1,6 position. The chain is 1,4-alpha-glucan branching enzyme GlgB from Burkholderia orbicola (strain AU 1054).